The chain runs to 161 residues: MPSFDVVSEANMIEVKNAIEQSNKEISTRFDFKGSDARVEQKERELTLFADDDFKLGQVKDVLIGKLAKRNVDVRFLDYGKVEKIGGDKVKQVVTVKKGVTGDLAKKIVRLVKDSKIKVQASIQGDAVRISGTKRDDLQSTIAMLRKDVTDTPLDFNNFRD.

Belongs to the YajQ family.

Nucleotide-binding protein. This Burkholderia orbicola (strain MC0-3) protein is Nucleotide-binding protein Bcenmc03_2579.